A 210-amino-acid polypeptide reads, in one-letter code: Chaperone protein TorD (210 aa).

The protein belongs to the TorD/DmsD family. TorD subfamily.

It localises to the cytoplasm. Functionally, involved in the biogenesis of TorA. Acts on TorA before the insertion of the molybdenum cofactor and, as a result, probably favors a conformation of the apoenzyme that is competent for acquiring the cofactor. The protein is Chaperone protein TorD of Salmonella paratyphi B (strain ATCC BAA-1250 / SPB7).